A 244-amino-acid polypeptide reads, in one-letter code: HTH-type transcriptional regulator RdgA (244 aa).

The 54-residue stretch at 9 to 62 (LKTARTAQGLSQKALGDMIGVSQAAIQKIEVGKASQTTKIVELSNNLRVRPEWL) folds into the HTH cro/C1-type domain. A DNA-binding region (H-T-H motif) is located at residues 20-39 (QKALGDMIGVSQAAIQKIEV).

Functionally, regulates pectin lyase production in response to DNA damage. The polypeptide is HTH-type transcriptional regulator RdgA (rdgA) (Pectobacterium carotovorum subsp. carotovorum (Erwinia carotovora subsp. carotovora)).